The following is a 438-amino-acid chain: Na(+)/H(+) antiporter NhaA (438 aa).

Helical transmembrane passes span 23–43, 62–82, 104–124, 133–153, 162–182, 185–205, 221–241, 302–322, 337–357, 372–392, and 410–430; these read FGGI…NSFL, FFIG…LFFL, SFPV…YFFL, GFGI…MLLG, VFLI…IALF, TNLK…LALL, VLLW…AVVL, FLAP…NAGV, FGVI…ITFI, WWHI…SMFI, and IAIL…LFAL.

This sequence belongs to the NhaA Na(+)/H(+) (TC 2.A.33) antiporter family.

It localises to the cell inner membrane. It catalyses the reaction Na(+)(in) + 2 H(+)(out) = Na(+)(out) + 2 H(+)(in). Na(+)/H(+) antiporter that extrudes sodium in exchange for external protons. The protein is Na(+)/H(+) antiporter NhaA of Helicobacter pylori (strain P12).